Consider the following 767-residue polypeptide: Cilia- and flagella-associated protein 91 (767 aa).

The interval 1–29 (MSHAVTIEEPQAQPQVSQTRYRERSRAGS) is disordered.

The protein belongs to the CFAP91 family. Interacts with MYCBP and AKAP1. Part of a complex containing MYCBP, AKAP1 and PRKAR2B. Interacts with CFAP61. As to quaternary structure, does not interact with MYCBP. In terms of processing, phosphorylated by PKA. In terms of tissue distribution, strongly expressed in the liver. Widely expressed, but strongly expressed in all spermatogenesis-related tissues, including the testis, the epithelium of cauda and the corpus epididymis, as well as the spermatid and mature sperm. Also expressed in Leydig cells.

The protein localises to the mitochondrion. The protein resides in the cytoplasm. Its subcellular location is the cytoskeleton. It localises to the cilium axoneme. Its function is as follows. Involved in sperm flagellum axonemal organization and function. May regulate cilium motility through its role in the assembly of the axonemal radial spokes. This is Cilia- and flagella-associated protein 91 from Homo sapiens (Human).